A 901-amino-acid chain; its full sequence is HTH-type transcriptional regulator MalT (901 aa).

Residue 39-46 (SPAGYGKT) coordinates ATP. The HTH luxR-type domain maps to 829–894 (ELIRTSPLTQ…AAVQHAQKLL (66 aa)). The segment at residues 853-872 (NEQIAGELEVAATTIKTHIR) is a DNA-binding region (H-T-H motif).

The protein belongs to the MalT family. Monomer in solution. Oligomerizes to an active state in the presence of the positive effectors ATP and maltotriose.

With respect to regulation, activated by ATP and maltotriose, which are both required for DNA binding. Its function is as follows. Positively regulates the transcription of the maltose regulon whose gene products are responsible for uptake and catabolism of malto-oligosaccharides. Specifically binds to the promoter region of its target genes, recognizing a short DNA motif called the MalT box. The chain is HTH-type transcriptional regulator MalT from Escherichia coli (strain 55989 / EAEC).